A 58-amino-acid polypeptide reads, in one-letter code: UPF0337 protein OB2685 (58 aa).

2 stretches are compositionally biased toward basic and acidic residues: residues 1–22 and 30–46; these read MSDGMKDKAKAIGKKIKGEAKD and DPQRKAEGKRDKAKGEA. The disordered stretch occupies residues 1–58; sequence MSDGMKDKAKAIGKKIKGEAKDQWGSATDDPQRKAEGKRDKAKGEAQDTIADAKNNNK.

This sequence belongs to the UPF0337 (CsbD) family.

This Oceanobacillus iheyensis (strain DSM 14371 / CIP 107618 / JCM 11309 / KCTC 3954 / HTE831) protein is UPF0337 protein OB2685.